The sequence spans 371 residues: Bifunctional enzyme IspD/IspF (371 aa).

Residues 1 to 210 (MSEISLIMLA…LDLPTPSFEI (210 aa)) are 2-C-methyl-D-erythritol 4-phosphate cytidylyltransferase. The segment at 211-371 (FTGNGFDVHE…NLKYFDWTRL (161 aa)) is 2-C-methyl-D-erythritol 2,4-cyclodiphosphate synthase. A divalent metal cation-binding residues include aspartate 217 and histidine 219. 4-CDP-2-C-methyl-D-erythritol 2-phosphate is bound by residues 217–219 (DVH) and 243–244 (HS). A divalent metal cation is bound at residue histidine 251. Residues 265–267 (DIG), 270–274 (YPDTD), 341–344 (TTTE), phenylalanine 348, and arginine 351 each bind 4-CDP-2-C-methyl-D-erythritol 2-phosphate.

The protein in the N-terminal section; belongs to the IspD/TarI cytidylyltransferase family. IspD subfamily. It in the C-terminal section; belongs to the IspF family. A divalent metal cation is required as a cofactor.

The catalysed reaction is 2-C-methyl-D-erythritol 4-phosphate + CTP + H(+) = 4-CDP-2-C-methyl-D-erythritol + diphosphate. The enzyme catalyses 4-CDP-2-C-methyl-D-erythritol 2-phosphate = 2-C-methyl-D-erythritol 2,4-cyclic diphosphate + CMP. It participates in isoprenoid biosynthesis; isopentenyl diphosphate biosynthesis via DXP pathway; isopentenyl diphosphate from 1-deoxy-D-xylulose 5-phosphate: step 2/6. The protein operates within isoprenoid biosynthesis; isopentenyl diphosphate biosynthesis via DXP pathway; isopentenyl diphosphate from 1-deoxy-D-xylulose 5-phosphate: step 4/6. Bifunctional enzyme that catalyzes the formation of 4-diphosphocytidyl-2-C-methyl-D-erythritol from CTP and 2-C-methyl-D-erythritol 4-phosphate (MEP) (IspD), and catalyzes the conversion of 4-diphosphocytidyl-2-C-methyl-D-erythritol 2-phosphate (CDP-ME2P) to 2-C-methyl-D-erythritol 2,4-cyclodiphosphate (ME-CPP) with a corresponding release of cytidine 5-monophosphate (CMP) (IspF). In Campylobacter jejuni subsp. jejuni serotype O:6 (strain 81116 / NCTC 11828), this protein is Bifunctional enzyme IspD/IspF.